The following is a 311-amino-acid chain: Uridine phosphorylase 1 (311 aa).

Phosphate contacts are provided by residues glycine 61, arginine 95, and 139 to 142 (RIGT). Uridine contacts are provided by residues 143–144 (SG) and 218–220 (QGR).

It belongs to the PNP/UDP phosphorylase family. Homodimer. Post-translationally, the N-terminus is blocked.

It catalyses the reaction uridine + phosphate = alpha-D-ribose 1-phosphate + uracil. The catalysed reaction is 2'-deoxyuridine + phosphate = 2-deoxy-alpha-D-ribose 1-phosphate + uracil. It participates in pyrimidine metabolism; UMP biosynthesis via salvage pathway; uracil from uridine (phosphorylase route): step 1/1. Strongly inhibited by 2,2'-anhydro-5-ethyluridine, a competitive inhibitor. Its function is as follows. Catalyzes the reversible phosphorylytic cleavage of uridine to uracil and ribose-1-phosphate which can then be utilized as carbon and energy sources or in the rescue of pyrimidine bases for nucleotide synthesis. Shows broad substrate specificity and can also accept deoxyuridine and other analogous compounds. The polypeptide is Uridine phosphorylase 1 (Mus musculus (Mouse)).